Consider the following 368-residue polypeptide: 3-dehydroquinate synthase (368 aa).

Residues 109 to 113 (GVIGD), 133 to 134 (TS), Lys-146, Lys-155, and 173 to 176 (TLQT) contribute to the NAD(+) site. Zn(2+)-binding residues include Glu-188, His-253, and His-270.

It belongs to the sugar phosphate cyclases superfamily. Dehydroquinate synthase family. It depends on Co(2+) as a cofactor. Zn(2+) serves as cofactor. The cofactor is NAD(+).

The protein resides in the cytoplasm. The enzyme catalyses 7-phospho-2-dehydro-3-deoxy-D-arabino-heptonate = 3-dehydroquinate + phosphate. It functions in the pathway metabolic intermediate biosynthesis; chorismate biosynthesis; chorismate from D-erythrose 4-phosphate and phosphoenolpyruvate: step 2/7. Its function is as follows. Catalyzes the conversion of 3-deoxy-D-arabino-heptulosonate 7-phosphate (DAHP) to dehydroquinate (DHQ). This Synechococcus sp. (strain ATCC 27144 / PCC 6301 / SAUG 1402/1) (Anacystis nidulans) protein is 3-dehydroquinate synthase.